Reading from the N-terminus, the 310-residue chain is Malate dehydrogenase (310 aa).

NAD(+) contacts are provided by residues 7–12 (GAGNVG) and Asp32. Residues Arg81 and Arg87 each coordinate substrate. Residues Asn94 and 117–119 (VSN) contribute to the NAD(+) site. Positions 119 and 150 each coordinate substrate. Residue His174 is the Proton acceptor of the active site.

It belongs to the LDH/MDH superfamily. MDH type 3 family.

The catalysed reaction is (S)-malate + NAD(+) = oxaloacetate + NADH + H(+). Its function is as follows. Catalyzes the reversible oxidation of malate to oxaloacetate. This chain is Malate dehydrogenase, found in Chlorobium phaeobacteroides (strain DSM 266 / SMG 266 / 2430).